A 30-amino-acid polypeptide reads, in one-letter code: Mejucin (30 aa).

It is found in the secreted. Bacteriocin that inhibits the growth of several Gram-positive bacteria, especially the food-borne pathogens L.monocytogenes, B.cereus strain ATCC 11778, B.cereus strain ATCC 21366, B.cereus strain ATCC 10876 and B.cereus strain ATCC 14579. Likely to act by disrupting the pathogen membrane resulting in leakage of intracellular constituents. Does not inhibit the growth of Gram-negative bacteria. The protein is Mejucin of Bacillus subtilis.